A 120-amino-acid chain; its full sequence is Large ribosomal subunit protein uL18 (120 aa).

The protein belongs to the universal ribosomal protein uL18 family. In terms of assembly, part of the 50S ribosomal subunit; part of the 5S rRNA/L5/L18/L25 subcomplex. Contacts the 5S and 23S rRNAs.

In terms of biological role, this is one of the proteins that bind and probably mediate the attachment of the 5S RNA into the large ribosomal subunit, where it forms part of the central protuberance. The sequence is that of Large ribosomal subunit protein uL18 from Rhizobium etli (strain CIAT 652).